A 430-amino-acid chain; its full sequence is Adenylosuccinate synthetase (430 aa).

Residues 12-18 (GDEGKGK) and 40-42 (GHT) each bind GTP. The active-site Proton acceptor is aspartate 13. 2 residues coordinate Mg(2+): aspartate 13 and glycine 40. Residues 13–16 (DEGK), 38–41 (NAGH), threonine 130, arginine 144, glutamine 224, threonine 239, and arginine 303 each bind IMP. Histidine 41 acts as the Proton donor in catalysis. 299-305 (TVTSRKR) is a substrate binding site. Residues arginine 305, 331–333 (KLD), and 413–415 (STS) contribute to the GTP site.

It belongs to the adenylosuccinate synthetase family. Homodimer. Mg(2+) is required as a cofactor.

The protein resides in the cytoplasm. The enzyme catalyses IMP + L-aspartate + GTP = N(6)-(1,2-dicarboxyethyl)-AMP + GDP + phosphate + 2 H(+). Its pathway is purine metabolism; AMP biosynthesis via de novo pathway; AMP from IMP: step 1/2. In terms of biological role, plays an important role in the de novo pathway of purine nucleotide biosynthesis. Catalyzes the first committed step in the biosynthesis of AMP from IMP. This chain is Adenylosuccinate synthetase, found in Pelagibacter ubique (strain HTCC1062).